A 148-amino-acid polypeptide reads, in one-letter code: Nucleoside diphosphate kinase (148 aa).

ATP is bound by residues lysine 9, phenylalanine 57, arginine 85, threonine 91, arginine 102, and asparagine 112. The residue at position 91 (threonine 91) is a Phosphothreonine. Catalysis depends on histidine 115, which acts as the Pros-phosphohistidine intermediate. Serine 122 is modified (phosphoserine).

This sequence belongs to the NDK family. In terms of assembly, homotetramer. The cofactor is Mg(2+).

It is found in the cytoplasm. The catalysed reaction is a 2'-deoxyribonucleoside 5'-diphosphate + ATP = a 2'-deoxyribonucleoside 5'-triphosphate + ADP. It catalyses the reaction a ribonucleoside 5'-diphosphate + ATP = a ribonucleoside 5'-triphosphate + ADP. Its function is as follows. Major role in the synthesis of nucleoside triphosphates other than ATP. The ATP gamma phosphate is transferred to the NDP beta phosphate via a ping-pong mechanism, using a phosphorylated active-site intermediate. The polypeptide is Nucleoside diphosphate kinase (Bacillus licheniformis (strain ATCC 14580 / DSM 13 / JCM 2505 / CCUG 7422 / NBRC 12200 / NCIMB 9375 / NCTC 10341 / NRRL NRS-1264 / Gibson 46)).